Consider the following 241-residue polypeptide: 1-(5-phosphoribosyl)-5-[(5-phosphoribosylamino)methylideneamino] imidazole-4-carboxamide isomerase (241 aa).

Residue Asp10 is the Proton acceptor of the active site. The active-site Proton donor is Asp129.

This sequence belongs to the HisA/HisF family.

The protein resides in the cytoplasm. The catalysed reaction is 1-(5-phospho-beta-D-ribosyl)-5-[(5-phospho-beta-D-ribosylamino)methylideneamino]imidazole-4-carboxamide = 5-[(5-phospho-1-deoxy-D-ribulos-1-ylimino)methylamino]-1-(5-phospho-beta-D-ribosyl)imidazole-4-carboxamide. It participates in amino-acid biosynthesis; L-histidine biosynthesis; L-histidine from 5-phospho-alpha-D-ribose 1-diphosphate: step 4/9. The polypeptide is 1-(5-phosphoribosyl)-5-[(5-phosphoribosylamino)methylideneamino] imidazole-4-carboxamide isomerase (Salinispora tropica (strain ATCC BAA-916 / DSM 44818 / JCM 13857 / NBRC 105044 / CNB-440)).